The sequence spans 81 residues: Large ribosomal subunit protein bL27m (81 aa).

Residues 1 to 11 (MATKKSGGSSR) show a composition bias toward polar residues. The interval 1 to 20 (MATKKSGGSSRNGRDSKGRR) is disordered.

It belongs to the bacterial ribosomal protein bL27 family.

The protein localises to the mitochondrion. In Reclinomonas americana, this protein is Large ribosomal subunit protein bL27m (RPL27).